A 479-amino-acid polypeptide reads, in one-letter code: MKGGELLVLLLASSLCLSAAVAAQETCPADIGAKCTDAASDDWEGEFFPGIDKINYEGPTSKKPLSYKWYNAEEVILGKKMKDWFRFSVAFWHTFRGTGGDPFGAPTKNWPWEDGTNSLAMAKRRMKAHFEFMEKLGVERWCFHDRDIAPDGKTLAETNANLDEIVELAKQLQSETNIKPLWGTAQLFMHPRYMHGAATSPEVKVYAYAAAQVKKALEVTHYLGGENYVFWGGREGYQTLLNTDMKRELEHLANFLQAAVNHKKKIGFNGTLLIEPKPQEPTKHQYDWDVATTFSFLQKFGLTGEFKINVECNHATLSGHSCHHELETARINDILGNIDANTGDPQVGWDTDEFLTDISEATLIMSSVVKNDGLAPGGFNFYAKLRRESTDVEDLFIAHISGMDTMARGRRNVVKLIEDGSLDELVRKRYQSFDTEIGAMIEAGKGDFETLEKKALEWGEPTVPSGKQELAEMLFQSAL.

Histidine 144 is a catalytic residue. Residues glutamate 275, glutamate 311, histidine 314, aspartate 339, aspartate 350, aspartate 352, and tyrosine 382 each contribute to the Mn(2+) site.

The protein belongs to the xylose isomerase family. In terms of assembly, homodimer. The cofactor is Mn(2+).

It carries out the reaction alpha-D-xylose = alpha-D-xylulofuranose. The sequence is that of Xylose isomerase (XYLA) from Hordeum vulgare (Barley).